A 474-amino-acid polypeptide reads, in one-letter code: Equilibrative nucleoside transporter 3 (474 aa).

Residues 1-53 are Cytoplasmic-facing; sequence MAIISEDDFRHTSNSTYRTASSSLRADQEALLEKLLDRPPPSLQRPEDRFNGT. Residues S21 and S23 each carry the phosphoserine modification. Positions 31–32 match the Dileucine internalization motif motif; that stretch reads LL. The chain crosses the membrane as a helical span at residues 54-74; that stretch reads YIIFFSLGIGGLLPWNFFVTA. The Extracellular segment spans residues 75-105; it reads QEYWIFKLSNCSSPAAGEEPKDSDILNYFES. The N-linked (GlcNAc...) asparagine glycan is linked to N84. The chain crosses the membrane as a helical span at residues 106–126; that stretch reads YLAVASTVPSVLCLALNFLLV. Residues 127–134 are Cytoplasmic-facing; that stretch reads NRVPIRVR. Residues 135-155 traverse the membrane as a helical segment; sequence VLASLTVMLAIFIVMTVLVKV. The Extracellular segment spans residues 156-161; it reads DTSSWT. Residues 162–182 form a helical membrane-spanning segment; the sequence is HSFFTITITCMAILSGTSTIF. Over 183–201 the chain is Cytoplasmic; it reads NSSVFGMTGSFPMRNSQAL. A helical transmembrane segment spans residues 202–222; the sequence is ISGGAMGGTLSAVASLVDLAV. Over 223–230 the chain is Extracellular; the sequence is ASDVTDST. Residues 231 to 251 traverse the membrane as a helical segment; the sequence is LAFFLTADIFLALCIGLYLLL. Topologically, residues 252–305 are cytoplasmic; it reads PRLDYARYYMKPVWPTVFSGEEQLPQDSPSPTSVAPGSSDPQTPPLGPILKKTT. The segment at 272-294 is disordered; that stretch reads EEQLPQDSPSPTSVAPGSSDPQT. The span at 276–292 shows a compositional bias: polar residues; sequence PQDSPSPTSVAPGSSDP. The helical transmembrane segment at 306–326 threads the bilayer; it reads GLGFCIIYLFFITSLIFPAIC. The Extracellular portion of the chain corresponds to 327–339; that stretch reads TNIESLSKGSGSP. The helical transmembrane segment at 340 to 357 threads the bilayer; it reads WSTKFFVPLTTFLLYNFA. Residues 358–376 are Cytoplasmic-facing; it reads DLCGRQVTAWIQVPGPRSK. Residues 377–397 traverse the membrane as a helical segment; that stretch reads ALPGLALLRTCFVPLFVFCNY. Residues 398-414 are Extracellular-facing; it reads QPRGHLHTVLFQSDVYP. Residues 415–435 traverse the membrane as a helical segment; the sequence is VLFTSLLGLSNGYLSTLALIY. Residues 436–453 are Cytoplasmic-facing; the sequence is GPKIVPRELAEATGVVMT. The helical transmembrane segment at 454–474 threads the bilayer; that stretch reads FYMGLGLVLGSACSALLVHLI.

It belongs to the SLC29A/ENT transporter (TC 2.A.57) family.

It is found in the lysosome membrane. Its subcellular location is the late endosome membrane. The protein resides in the mitochondrion membrane. The protein localises to the cell membrane. It carries out the reaction adenosine(in) = adenosine(out). The enzyme catalyses guanosine(in) = guanosine(out). It catalyses the reaction inosine(in) = inosine(out). The catalysed reaction is uridine(out) = uridine(in). It carries out the reaction cytidine(in) = cytidine(out). The enzyme catalyses thymidine(in) = thymidine(out). It catalyses the reaction 2'-deoxyadenosine(in) = 2'-deoxyadenosine(out). The catalysed reaction is 2'-deoxycytidine(in) = 2'-deoxycytidine(out). It carries out the reaction guanine(out) = guanine(in). The enzyme catalyses uracil(in) = uracil(out). It catalyses the reaction (R)-noradrenaline(out) = (R)-noradrenaline(in). The catalysed reaction is dopamine(out) = dopamine(in). It carries out the reaction serotonin(out) = serotonin(in). The enzyme catalyses tyramine(in) = tyramine(out). It catalyses the reaction ATP(in) = ATP(out). Functionally, uniporter that mediates the facilitative transport of nucleoside across lysosomal and mitochondrial membranes. Functions as a non-electrogenic Na(+)-independent transporter. Substrate transport is pH-dependent and enhanced under acidic condition, probably reflecting the location of the transporter in acidic intracellular compartments. Proton is not a cotransporting ion but most likely change the ionization state of the transporter which dictates transport-permissible/impermissible conformation for nucleoside translocation. May direct the nucleoside transport from lysosomes to cytosol or cytosol to mitochondria to facilitate the fundamental function of salvage synthesis of nucleic acids. Involved in the transport of nucleosides (adenosine, guanosine, uridine, thymidine, cytidine and inosine) and deoxynucleosides (deoxyadenosine, deoxycytidine). Also mediates transport of purine nucleobases (adenine, guanine) and pyrimidine nucleobases (uracil). Also able to transport monoamine neurotransmitters dopamine, serotonin, noradrenaline and tyramine. Capable of transporting ATP. Mediates nucleoside export from lysosomes in macrophages, which regulates macrophage functions and numbers. The chain is Equilibrative nucleoside transporter 3 (SLC29A3) from Bos taurus (Bovine).